The following is a 124-amino-acid chain: UPF0212 protein Hlac_0869 (124 aa).

The protein belongs to the UPF0212 family.

The sequence is that of UPF0212 protein Hlac_0869 from Halorubrum lacusprofundi (strain ATCC 49239 / DSM 5036 / JCM 8891 / ACAM 34).